The primary structure comprises 474 residues: PRAME family member 17 (474 aa).

An LRR 1; degenerate repeat occupies arginine 97–cysteine 124. The LRR 2; degenerate repeat unit spans residues histidine 179–tyrosine 203. One copy of the LRR 3; degenerate repeat lies at proline 204 to glutamine 230. The stretch at methionine 231–cysteine 265 is one LRR 4; degenerate repeat. LRR repeat units lie at residues leucine 266–leucine 291, lysine 292–lysine 323, glutamate 324–alanine 342, alanine 348–arginine 375, and cysteine 376–histidine 400.

This sequence belongs to the PRAME family.

The sequence is that of PRAME family member 17 from Homo sapiens (Human).